The primary structure comprises 189 residues: Chitin synthase 2 (189 aa).

This sequence belongs to the chitin synthase family. Class II subfamily.

Its subcellular location is the cell membrane. The enzyme catalyses [(1-&gt;4)-N-acetyl-beta-D-glucosaminyl](n) + UDP-N-acetyl-alpha-D-glucosamine = [(1-&gt;4)-N-acetyl-beta-D-glucosaminyl](n+1) + UDP + H(+). In terms of biological role, polymerizes chitin, a structural polymer of the cell wall and septum, by transferring the sugar moiety of UDP-GlcNAc to the non-reducing end of the growing chitin polymer. In Aspergillus niger, this protein is Chitin synthase 2 (chs2).